Here is a 124-residue protein sequence, read N- to C-terminus: MSGRGKGAKAKSKAKSRSSRAGLQFPVGRVHRFLKKGNYGNRVGAGAPVYLAAVLEYLTAEILELAGNAARDNKKSRIIPRHLQLAVRNDEELNKLLGGVTIAQGGVLPNIQTVLLPKKTGKSA.

Residues 1–18 (MSGRGKGAKAKSKAKSRS) show a composition bias toward basic residues. The tract at residues 1-21 (MSGRGKGAKAKSKAKSRSSRA) is disordered. Ser2 carries the post-translational modification N-acetylserine. Ser2 bears the Phosphoserine mark. Gln104 is modified (N5-methylglutamine). Lys119 is covalently cross-linked (Glycyl lysine isopeptide (Lys-Gly) (interchain with G-Cter in ubiquitin)).

Belongs to the histone H2A family. In terms of assembly, the nucleosome is a histone octamer containing two molecules each of H2A, H2B, H3 and H4 assembled in one H3-H4 heterotetramer and two H2A-H2B heterodimers. The octamer wraps approximately 147 bp of DNA. In terms of processing, monoubiquitination of Lys-119 gives a specific tag for epigenetic transcriptional repression. Post-translationally, phosphorylation of Ser-2 directly represses transcription.

The protein localises to the nucleus. The protein resides in the chromosome. Functionally, core component of nucleosome. Nucleosomes wrap and compact DNA into chromatin, limiting DNA accessibility to the cellular machineries which require DNA as a template. Histones thereby play a central role in transcription regulation, DNA repair, DNA replication and chromosomal stability. DNA accessibility is regulated via a complex set of post-translational modifications of histones, also called histone code, and nucleosome remodeling. The polypeptide is Late histone H2A.2.1 (Psammechinus miliaris (Green sea urchin)).